Here is a 201-residue protein sequence, read N- to C-terminus: UPF0301 protein MSMEG_6921/MSMEI_6732 (201 aa).

Belongs to the UPF0301 (AlgH) family.

The chain is UPF0301 protein MSMEG_6921/MSMEI_6732 from Mycolicibacterium smegmatis (strain ATCC 700084 / mc(2)155) (Mycobacterium smegmatis).